Consider the following 343-residue polypeptide: Selenide, water dikinase (343 aa).

Selenocysteine 16 is an active-site residue. Selenocysteine 16 is a non-standard amino acid (selenocysteine). ATP-binding positions include lysine 19 and 46–48 (GAE). Position 49 (aspartate 49) interacts with Mg(2+). Residues aspartate 66, aspartate 89, and 137-139 (GHT) each bind ATP. Aspartate 89 contacts Mg(2+). Aspartate 225 is a Mg(2+) binding site.

This sequence belongs to the selenophosphate synthase 1 family. Class I subfamily. In terms of assembly, homodimer. Mg(2+) is required as a cofactor.

The enzyme catalyses hydrogenselenide + ATP + H2O = selenophosphate + AMP + phosphate + 2 H(+). In terms of biological role, synthesizes selenophosphate from selenide and ATP. The chain is Selenide, water dikinase from Geobacter sp. (strain M21).